The primary structure comprises 265 residues: Aquaporin-5 (265 aa).

Residues 1 to 12 (MKKEVCSLAFFK) are Cytoplasmic-facing. Residues 13–33 (AVFAEFLATLIFVFFGLGSAL) form a helical membrane-spanning segment. Topologically, residues 34 to 39 (KWPSAL) are extracellular. The chain crosses the membrane as a helical span at residues 40–60 (PTILQISIAFGLAIGTLAQAL). The Cytoplasmic portion of the chain corresponds to 61–65 (GPVSG). The segment at residues 66–74 (GHINPAITL) is an intramembrane region (discontinuously helical). The NPA 1 signature appears at 69–71 (NPA). Topologically, residues 75–87 (ALLIGNQISLLRA) are cytoplasmic. The helical transmembrane segment at 88 to 108 (VFYVAAQLVGAIAGAGILYWL) threads the bilayer. Over 109 to 126 (APLNARGNLAVNALNNNT) the chain is Extracellular. Asn-124 carries an N-linked (GlcNAc...) asparagine glycan. A helical transmembrane segment spans residues 127–147 (TPGKAMVVELILTFQLALCIF). The Cytoplasmic segment spans residues 148–158 (SSTDSRRTSPV). Residues 159-179 (GSPALSIGLSVTLGHLVGIYF) traverse the membrane as a helical segment. Position 180 (Thr-180) is a topological domain, extracellular. Residues 181–191 (GCSMNPARSFG) constitute an intramembrane region (discontinuously helical). The NPA 2 motif lies at 185–187 (NPA). Topologically, residues 192-203 (PAVVMNRFSPSH) are extracellular. A helical transmembrane segment spans residues 204 to 224 (WVFWVGPIVGAMLAAILYFYL). Topologically, residues 225-265 (LFPSSLSLHDRVAVVKGTYEPEEDWEDHREERKKTIELTAH) are cytoplasmic.

This sequence belongs to the MIP/aquaporin (TC 1.A.8) family. Homotetramer; each monomer provides an independent water pore. Interacts with TRPV4; the interaction is probably indirect and regulates TRPV4 activation by hypotonicity. As to expression, salivary glands, lacrimal glands, corneal epithelium in eye, trachea and lung.

It localises to the apical cell membrane. Its subcellular location is the cell membrane. The protein localises to the cytoplasmic vesicle membrane. It carries out the reaction H2O(in) = H2O(out). Aquaporins form homotetrameric transmembrane channels, with each monomer independently mediating water transport across the plasma membrane along its osmotic gradient. Plays an important role in fluid secretion in salivary glands. Required for TRPV4 activation by hypotonicity. Together with TRPV4, controls regulatory volume decrease in salivary epithelial cells. Seems to play a redundant role in water transport in the eye, lung and in sweat glands. In Rattus norvegicus (Rat), this protein is Aquaporin-5.